The following is a 118-amino-acid chain: uncharacterized protein (118 aa).

This sequence belongs to the HesB/IscA family. Ycf83 subfamily.

This is an uncharacterized protein from Synechocystis sp. (strain ATCC 27184 / PCC 6803 / Kazusa).